The following is a 78-amino-acid chain: UPF0270 protein PC1_3850 (78 aa).

The protein belongs to the UPF0270 family.

The chain is UPF0270 protein PC1_3850 from Pectobacterium carotovorum subsp. carotovorum (strain PC1).